Here is a 189-residue protein sequence, read N- to C-terminus: Protein GrpE (189 aa).

The tract at residues 1-24 is disordered; sequence MADEQNLDTQNPEAQAAENAAPSD. Residues 10-24 show a composition bias toward low complexity; the sequence is QNPEAQAAENAAPSD.

Belongs to the GrpE family. In terms of assembly, homodimer.

The protein localises to the cytoplasm. In terms of biological role, participates actively in the response to hyperosmotic and heat shock by preventing the aggregation of stress-denatured proteins, in association with DnaK and GrpE. It is the nucleotide exchange factor for DnaK and may function as a thermosensor. Unfolded proteins bind initially to DnaJ; upon interaction with the DnaJ-bound protein, DnaK hydrolyzes its bound ATP, resulting in the formation of a stable complex. GrpE releases ADP from DnaK; ATP binding to DnaK triggers the release of the substrate protein, thus completing the reaction cycle. Several rounds of ATP-dependent interactions between DnaJ, DnaK and GrpE are required for fully efficient folding. The chain is Protein GrpE from Ectopseudomonas mendocina (strain ymp) (Pseudomonas mendocina).